The chain runs to 60 residues: L-amino-acid oxidase (60 aa).

Residue 1-4 participates in FAD binding; that stretch reads GPMR. Arginine 4 provides a ligand contact to substrate.

The protein belongs to the flavin monoamine oxidase family. FIG1 subfamily. In terms of assembly, homodimer; non-covalently linked. It depends on FAD as a cofactor. In terms of processing, contains 2 disulfide bonds. Post-translationally, N-glycosylated. Expressed by the venom gland.

It is found in the secreted. The enzyme catalyses an L-alpha-amino acid + O2 + H2O = a 2-oxocarboxylate + H2O2 + NH4(+). Catalyzes an oxidative deamination of predominantly hydrophobic and aromatic L-amino acids, thus producing hydrogen peroxide that may contribute to the diverse toxic effects of this enzyme. Exhibits diverse biological activities, such as hemorrhage, hemolysis, edema, apoptosis of vascular endothelial cells or tumor cell lines, antibacterial and antiparasitic activities, as well as regulation of platelet aggregation. Effects of snake L-amino oxidases on platelets are controversial, since they either induce aggregation or inhibit agonist-induced aggregation. These different effects are probably due to different experimental conditions. The protein is L-amino-acid oxidase of Bitis gabonica (Gaboon adder).